The following is a 238-amino-acid chain: Large ribosomal subunit protein uL1 (238 aa).

It belongs to the universal ribosomal protein uL1 family. Part of the 50S ribosomal subunit.

Binds directly to 23S rRNA. The L1 stalk is quite mobile in the ribosome, and is involved in E site tRNA release. Its function is as follows. Protein L1 is also a translational repressor protein, it controls the translation of the L11 operon by binding to its mRNA. The protein is Large ribosomal subunit protein uL1 of Frankia alni (strain DSM 45986 / CECT 9034 / ACN14a).